The chain runs to 126 residues: Large ribosomal subunit protein bL12 (126 aa).

It belongs to the bacterial ribosomal protein bL12 family. In terms of assembly, homodimer. Part of the ribosomal stalk of the 50S ribosomal subunit. Forms a multimeric L10(L12)X complex, where L10 forms an elongated spine to which 2 to 4 L12 dimers bind in a sequential fashion. Binds GTP-bound translation factors.

Forms part of the ribosomal stalk which helps the ribosome interact with GTP-bound translation factors. Is thus essential for accurate translation. This is Large ribosomal subunit protein bL12 from Blochmanniella floridana.